The primary structure comprises 1193 residues: Falcilysin (1193 aa).

His-129 is a Zn(2+) binding site. The active-site Proton acceptor is Glu-132. 2 residues coordinate Zn(2+): His-133 and Glu-243. The segment at 376–404 (DKTNNHNNNHSNNQSSENNGYSNGSHSSD) is disordered. The span at 380–394 (NHNNNHSNNQSSENN) shows a compositional bias: low complexity. Over residues 395–404 (GYSNGSHSSD) the composition is skewed to polar residues. A coiled-coil region spans residues 583–619 (LLEGDENYAQEQENLEKQELKKRIENFNEQEKEQVIK).

Belongs to the peptidase M16 family. Monomer. Component of the hemozoin formation complex (HFC) composed of falcipains FP2A and/or FP2B, plasmepsins PMII, PMIII/HAP and PMIV, heme detoxifying protein HDP and falcilysin FLN. The HFC complex is involved in hemoglobin degradation and detoxification of heme in the food vacuole during the asexual blood stage. Requires Zn(2+) as cofactor. Does not require processing for targeting to the food vacuole or maturation.

The protein localises to the vacuole membrane. The protein resides in the plastid. It is found in the apicoplast. It localises to the vesicle. Its function is as follows. In the food vacuole, acts downstream of proteases plasmepsins PMI and PMII and falcipains during the catabolism of host hemoglobin by cleaving peptide fragments of alpha and beta hemoglobin subunits generated by PMI and PMII and falcipains. In the apicoplast, degrades apicoplast transit peptides after their cleavage. Prefers bulky hydrophobic amino acids in the P1' position at both acidic and neutral pH. At P2', prefers hydrophobic residues at acidic pH; at neutral pH, these same residues are abundant but prefers Arg. At P3', prefers hydrophobic residues, especially Met, at both pH conditions. At P4' and P5', prefers acidic residues at acidic pH, however, at neutral pH, the enzyme is less selective at these positions. The optimal site cleavage at acidic pH is YNEHS-|-FFMEE and, at neutral pH, MKRHS-|-FRMRG. The sequence is that of Falcilysin from Plasmodium falciparum (isolate 3D7).